The sequence spans 202 residues: NADH-quinone oxidoreductase subunit B (202 aa).

Residues 1–13 (MSSPTTKFSNAAS) show a composition bias toward polar residues. The tract at residues 1–32 (MSSPTTKFSNAASSAGGPRVTPAAASILDPRT) is disordered. C81, C82, C146, and C176 together coordinate [4Fe-4S] cluster.

Belongs to the complex I 20 kDa subunit family. NDH-1 is composed of 14 different subunits. Subunits NuoB, C, D, E, F, and G constitute the peripheral sector of the complex. The cofactor is [4Fe-4S] cluster.

The protein resides in the cell inner membrane. The catalysed reaction is a quinone + NADH + 5 H(+)(in) = a quinol + NAD(+) + 4 H(+)(out). Its function is as follows. NDH-1 shuttles electrons from NADH, via FMN and iron-sulfur (Fe-S) centers, to quinones in the respiratory chain. The immediate electron acceptor for the enzyme in this species is believed to be ubiquinone. Couples the redox reaction to proton translocation (for every two electrons transferred, four hydrogen ions are translocated across the cytoplasmic membrane), and thus conserves the redox energy in a proton gradient. The sequence is that of NADH-quinone oxidoreductase subunit B from Nitrobacter hamburgensis (strain DSM 10229 / NCIMB 13809 / X14).